Consider the following 139-residue polypeptide: Deoxyuridine 5'-triphosphate nucleotidohydrolase (139 aa).

Residues 58–60 (RSG), asparagine 71, 75–77 (LID), and methionine 85 contribute to the substrate site.

The protein belongs to the dUTPase family. Mg(2+) is required as a cofactor.

It carries out the reaction dUTP + H2O = dUMP + diphosphate + H(+). It participates in pyrimidine metabolism; dUMP biosynthesis; dUMP from dCTP (dUTP route): step 2/2. Its function is as follows. This enzyme is involved in nucleotide metabolism: it produces dUMP, the immediate precursor of thymidine nucleotides and it decreases the intracellular concentration of dUTP so that uracil cannot be incorporated into DNA. The sequence is that of Deoxyuridine 5'-triphosphate nucleotidohydrolase from Gamma-proteobacterium EBAC31A08.